The chain runs to 99 residues: uncharacterized protein (99 aa).

A signal peptide spans 1-17 (MMMNAFFPAMALMVLVG). The N-palmitoyl cysteine moiety is linked to residue Cys18. The S-diacylglycerol cysteine moiety is linked to residue Cys18.

It localises to the cell membrane. This is an uncharacterized protein from Shigella flexneri.